A 425-amino-acid polypeptide reads, in one-letter code: Sucrose-phosphatase 2 (425 aa).

Belongs to the sucrose phosphatase family. As to quaternary structure, homodimer. It depends on Mg(2+) as a cofactor.

The enzyme catalyses sucrose 6(F)-phosphate + H2O = sucrose + phosphate. It participates in glycan biosynthesis; sucrose biosynthesis; sucrose from D-fructose 6-phosphate and UDP-alpha-D-glucose: step 2/2. With respect to regulation, inhibited by EDTA. In terms of biological role, catalyzes the final step of sucrose synthesis. The polypeptide is Sucrose-phosphatase 2 (SPP2) (Nicotiana tabacum (Common tobacco)).